We begin with the raw amino-acid sequence, 21 residues long: Nigrocin-2GRb (21 aa).

Expressed by the skin glands.

It localises to the secreted. In terms of biological role, antimicrobial peptide active against the Gram-positive bacterium S.aureus (MIC=12.5 uM) and against the Gram-negative bacteria E.coli (MIC=3 uM). Has antifungal activity against C.albicans (MIC=50 uM). Has some hemolytic activity against human erythrocytes (LC(50)=40 uM). This is Nigrocin-2GRb from Odorrana grahami (Yunnanfu frog).